The chain runs to 211 residues: Probable nicotinate-nucleotide adenylyltransferase (211 aa).

The protein belongs to the NadD family.

It catalyses the reaction nicotinate beta-D-ribonucleotide + ATP + H(+) = deamido-NAD(+) + diphosphate. It participates in cofactor biosynthesis; NAD(+) biosynthesis; deamido-NAD(+) from nicotinate D-ribonucleotide: step 1/1. In terms of biological role, catalyzes the reversible adenylation of nicotinate mononucleotide (NaMN) to nicotinic acid adenine dinucleotide (NaAD). This Legionella pneumophila (strain Corby) protein is Probable nicotinate-nucleotide adenylyltransferase.